The primary structure comprises 85 residues: Small ribosomal subunit protein bS20 (85 aa).

This sequence belongs to the bacterial ribosomal protein bS20 family.

Binds directly to 16S ribosomal RNA. This is Small ribosomal subunit protein bS20 from Borrelia turicatae (strain 91E135).